A 417-amino-acid polypeptide reads, in one-letter code: Gamma-glutamyl phosphate reductase (417 aa).

It belongs to the gamma-glutamyl phosphate reductase family.

It localises to the cytoplasm. The enzyme catalyses L-glutamate 5-semialdehyde + phosphate + NADP(+) = L-glutamyl 5-phosphate + NADPH + H(+). Its pathway is amino-acid biosynthesis; L-proline biosynthesis; L-glutamate 5-semialdehyde from L-glutamate: step 2/2. Catalyzes the NADPH-dependent reduction of L-glutamate 5-phosphate into L-glutamate 5-semialdehyde and phosphate. The product spontaneously undergoes cyclization to form 1-pyrroline-5-carboxylate. This chain is Gamma-glutamyl phosphate reductase, found in Legionella pneumophila (strain Lens).